The primary structure comprises 85 residues: Actobindin homolog (85 aa).

In terms of domain architecture, WH2 spans 35-52; sequence DRNELLSGIKEGKELKKA.

Is able to bind two actin monomers at high concentrations of G-actin. The chain is Actobindin homolog from Entamoeba histolytica.